The sequence spans 228 residues: tRNA (guanine-N(1)-)-methyltransferase (228 aa).

Residues Gly-111 and 131–136 (IGDFIL) each bind S-adenosyl-L-methionine.

This sequence belongs to the RNA methyltransferase TrmD family. In terms of assembly, homodimer.

It is found in the cytoplasm. The catalysed reaction is guanosine(37) in tRNA + S-adenosyl-L-methionine = N(1)-methylguanosine(37) in tRNA + S-adenosyl-L-homocysteine + H(+). Functionally, specifically methylates guanosine-37 in various tRNAs. In Pelagibacter ubique (strain HTCC1062), this protein is tRNA (guanine-N(1)-)-methyltransferase.